The primary structure comprises 233 residues: Uridylate kinase (233 aa).

9–10 (GS) lines the ATP pocket. UMP is bound at residue Gly-43. ATP is bound by residues Gly-44 and Arg-48. Residues Asp-65 and 113-119 (VTPGQTT) contribute to the UMP site. The ATP site is built by Thr-139, Tyr-145, and Asp-148.

This sequence belongs to the UMP kinase family. Homohexamer.

The protein resides in the cytoplasm. The catalysed reaction is UMP + ATP = UDP + ADP. It functions in the pathway pyrimidine metabolism; CTP biosynthesis via de novo pathway; UDP from UMP (UMPK route): step 1/1. Inhibited by UTP. In terms of biological role, catalyzes the reversible phosphorylation of UMP to UDP. The polypeptide is Uridylate kinase (Methanosarcina mazei (strain ATCC BAA-159 / DSM 3647 / Goe1 / Go1 / JCM 11833 / OCM 88) (Methanosarcina frisia)).